The following is a 539-amino-acid chain: Cell division control protein 6 homolog (539 aa).

Residues 1–40 (MPAIAGPSSSPQKHVVGSRSESIGGVRSAEVNTSRKRKLI) form a disordered region. Residues 35–38 (RKRK) carry the Nuclear localization signal motif.

It belongs to the CDC6/cdc18 family. In terms of tissue distribution, highly expressed in roots, flower buds and etiolated seedlings. Expressed in leaves and stems. Highly expressed in proliferating cells such as root meristems, leaf primordia and young growing leaves, as well as cells undergoing endoreduplication cycles.

Its subcellular location is the nucleus. May be involved in the initiation of DNA replication. May play a role in endoreduplication. Could act as one of the factors that contributes to maintain endoreduplication competence. The polypeptide is Cell division control protein 6 homolog (Arabidopsis thaliana (Mouse-ear cress)).